A 417-amino-acid polypeptide reads, in one-letter code: Prostaglandin E2 receptor EP3 subtype (417 aa).

Over 1–52 (MKATRDHASAPFCTRFNHSDPGIWAAERAVEAPNNLTLPPEPSEDCGSVSVA) the chain is Extracellular. N-linked (GlcNAc...) asparagine glycans are attached at residues N17 and N35. Residues 53–77 (FSMTMMITGFVGNALAITLVSKSYR) form a helical membrane-spanning segment. Residues 78-90 (RREGKRKKSFLLC) are Cytoplasmic-facing. The helical transmembrane segment at 91–111 (IGWLALTDMVGQLLTSPVVIV) threads the bilayer. The Extracellular portion of the chain corresponds to 112-130 (LYLSHQRWEQLDPSGRLCT). The helical transmembrane segment at 131 to 152 (FFGLTMTVFGLSSLFIASAMAV) threads the bilayer. The Cytoplasmic segment spans residues 153–174 (ERALATRAPHWYSSHMKTSVTR). The helical transmembrane segment at 175-196 (AVLLGVWLAVLAFALLPVLGVG) threads the bilayer. The Extracellular portion of the chain corresponds to 197–226 (QYTIQWPGTWCFISTGPGGNGTNSRQNWGN). N-linked (GlcNAc...) asparagine glycosylation is present at N216. The chain crosses the membrane as a helical span at residues 227–252 (VFFASAFAILGLSALVVTFACNLATI). Residues 253–282 (KALVSRCRAKATASQSSAQWGRITTETAIQ) lie on the Cytoplasmic side of the membrane. The helical transmembrane segment at 283–306 (LMGIMCVLSVCWSPLLIMMLKMIF) threads the bilayer. N-linked (GlcNAc...) asparagine glycosylation is present at N307. The Extracellular portion of the chain corresponds to 307–326 (NHTSVEHCKTYTENQDECNF). Residues 327–348 (FLIAVRLASLNQILDPWVYLLL) form a helical membrane-spanning segment. Residues 349-417 (RKILLQKFCQ…HIYLHTLEHQ (69 aa)) are Cytoplasmic-facing.

It belongs to the G-protein coupled receptor 1 family. As to quaternary structure, interacts (via C-terminus) with MKLN1.

The protein localises to the cell membrane. Receptor for prostaglandin E2 (PGE2). The various isoforms have identical ligand binding properties but interact with different second messenger systems: isoform EP3A couples to G(i)/G(o) proteins; isoform EP3B and isoform EP3C couple to G(s), and isoform EP3D couples to G(i), G(s) and G(p). Required for normal development of fever in response to pyrinogens, including IL1B, prostaglandin E2 and bacterial lipopolysaccharide (LPS). Required for normal potentiation of platelet aggregation by prostaglandin E2, and thus plays a role in the regulation of blood coagulation. Required for increased HCO3(-) secretion in the duodenum in response to mucosal acidification, and thereby contributes to the protection of the mucosa against acid-induced ulceration. Not required for normal kidney function, normal urine volume and osmolality. This Bos taurus (Bovine) protein is Prostaglandin E2 receptor EP3 subtype (PTGER3).